The following is a 377-amino-acid chain: Putative F-box protein At3g13830 (377 aa).

One can recognise an F-box domain in the interval 6–52; the sequence is TTTMSTLPMVLVDEILSRVPITSLRSLRSTCKRWEAQSKTNLVGGKA.

The protein is Putative F-box protein At3g13830 of Arabidopsis thaliana (Mouse-ear cress).